A 298-amino-acid chain; its full sequence is Multifunctional dioxygenase ausE (298 aa).

Residues R72 and Q127 each coordinate substrate. Residues H130 and D132 each contribute to the Fe cation site. T167 contacts substrate. H214 lines the Fe cation pocket. R226 is a substrate binding site.

This sequence belongs to the PhyH family. In terms of assembly, homodimer. Fe cation is required as a cofactor.

It carries out the reaction preaustinoid A1 + 2-oxoglutarate + O2 = preaustinoid A2 + succinate + CO2 + H2O. The catalysed reaction is preaustinoid A2 + 2-oxoglutarate + O2 = preaustinoid A3 + succinate + CO2 + H2O. The enzyme catalyses berkeleyone A + 2-oxoglutarate + O2 = preaustinoid A + succinate + CO2 + H2O. It functions in the pathway secondary metabolite biosynthesis; terpenoid biosynthesis. Its function is as follows. Multifunctional dioxygenase; part of the gene cluster B that mediates the biosynthesis of austinol and dehydroaustinol, two fungal meroterpenoids. The first step of the pathway is the synthesis of 3,5-dimethylorsellinic acid by the polyketide synthase ausA. 3,5-dimethylorsellinic acid is then prenylated by the polyprenyl transferase ausN. Further epoxidation by the FAD-dependent monooxygenase ausM and cyclization by the probable terpene cyclase ausL lead to the formation of protoaustinoid A. Protoaustinoid A is then oxidized to spiro-lactone preaustinoid A3 by the combined action of the FAD-binding monooxygenases ausB and ausC, and the dioxygenase ausE. Acid-catalyzed keto-rearrangement and ring contraction of the tetraketide portion of preaustinoid A3 by ausJ lead to the formation of preaustinoid A4. The aldo-keto reductase ausK, with the help of ausH, is involved in the next step by transforming preaustinoid A4 into isoaustinone which is in turn hydroxylated by the P450 monooxygenase ausI to form austinolide. Finally, the cytochrome P450 monooxygenase ausG modifies austinolide to austinol. Austinol can be further modified to dehydroaustinol which forms a diffusible complex with diorcinol that initiates conidiation. Due to genetic rearrangements of the clusters and the subsequent loss of some enzymes, the end products of the Emericella nidulans austinoid biosynthesis clusters are austinol and dehydroaustinol, even if additional enzymes, such as the O-acetyltransferase ausQ and the cytochrome P450 monooxygenase ausR are still functional. The protein is Multifunctional dioxygenase ausE of Emericella nidulans (strain FGSC A4 / ATCC 38163 / CBS 112.46 / NRRL 194 / M139) (Aspergillus nidulans).